The sequence spans 105 residues: Met repressor (105 aa).

The protein belongs to the MetJ family. As to quaternary structure, homodimer.

It is found in the cytoplasm. In terms of biological role, this regulatory protein, when combined with SAM (S-adenosylmethionine) represses the expression of the methionine regulon and of enzymes involved in SAM synthesis. This Erwinia tasmaniensis (strain DSM 17950 / CFBP 7177 / CIP 109463 / NCPPB 4357 / Et1/99) protein is Met repressor.